The following is a 305-amino-acid chain: UDP-3-O-acyl-N-acetylglucosamine deacetylase (305 aa).

Zn(2+) is bound by residues His-79, His-238, and Asp-242. Residue His-265 is the Proton donor of the active site.

This sequence belongs to the LpxC family. Requires Zn(2+) as cofactor.

It catalyses the reaction a UDP-3-O-[(3R)-3-hydroxyacyl]-N-acetyl-alpha-D-glucosamine + H2O = a UDP-3-O-[(3R)-3-hydroxyacyl]-alpha-D-glucosamine + acetate. It participates in glycolipid biosynthesis; lipid IV(A) biosynthesis; lipid IV(A) from (3R)-3-hydroxytetradecanoyl-[acyl-carrier-protein] and UDP-N-acetyl-alpha-D-glucosamine: step 2/6. Catalyzes the hydrolysis of UDP-3-O-myristoyl-N-acetylglucosamine to form UDP-3-O-myristoylglucosamine and acetate, the committed step in lipid A biosynthesis. This is UDP-3-O-acyl-N-acetylglucosamine deacetylase from Escherichia coli O45:K1 (strain S88 / ExPEC).